A 206-amino-acid chain; its full sequence is MELKVINQQGQAVESLQAAETLFGREYNEALVHQVVTAYLANARAGNRAQKDRSEINKSTKKPFRQKGTGRARAGRASSPLWRGGGKVFPNSPDENFSHKVNRKMFRAGMAAILSELLRSDRLVIIDDIKVDSPKTKEFAAKAKALGLENALVITGELDENLYLSSRNLSNVLVIEASQADPYSLVRFDKVVVTRDAVKQFEEQWA.

Residues 47–94 (NRAQKDRSEINKSTKKPFRQKGTGRARAGRASSPLWRGGGKVFPNSPD) form a disordered region. Basic and acidic residues predominate over residues 49–58 (AQKDRSEINK). Basic residues predominate over residues 59 to 74 (STKKPFRQKGTGRARA).

It belongs to the universal ribosomal protein uL4 family. As to quaternary structure, part of the 50S ribosomal subunit.

Functionally, one of the primary rRNA binding proteins, this protein initially binds near the 5'-end of the 23S rRNA. It is important during the early stages of 50S assembly. It makes multiple contacts with different domains of the 23S rRNA in the assembled 50S subunit and ribosome. In terms of biological role, forms part of the polypeptide exit tunnel. The polypeptide is Large ribosomal subunit protein uL4 (Laribacter hongkongensis (strain HLHK9)).